A 387-amino-acid polypeptide reads, in one-letter code: Phosphoglycerate kinase (387 aa).

Substrate contacts are provided by residues 21 to 23, R36, 59 to 62, R113, and R146; these read DLN and HLGR. ATP contacts are provided by residues K197, E314, and 340 to 343; that span reads GGDT.

It belongs to the phosphoglycerate kinase family. In terms of assembly, monomer.

It is found in the cytoplasm. It catalyses the reaction (2R)-3-phosphoglycerate + ATP = (2R)-3-phospho-glyceroyl phosphate + ADP. The protein operates within carbohydrate degradation; glycolysis; pyruvate from D-glyceraldehyde 3-phosphate: step 2/5. In Salmonella schwarzengrund (strain CVM19633), this protein is Phosphoglycerate kinase.